Consider the following 461-residue polypeptide: Argininosuccinate lyase (461 aa).

It belongs to the lyase 1 family. Argininosuccinate lyase subfamily.

The protein localises to the cytoplasm. It catalyses the reaction 2-(N(omega)-L-arginino)succinate = fumarate + L-arginine. Its pathway is amino-acid biosynthesis; L-arginine biosynthesis; L-arginine from L-ornithine and carbamoyl phosphate: step 3/3. The sequence is that of Argininosuccinate lyase from Aeromonas hydrophila subsp. hydrophila (strain ATCC 7966 / DSM 30187 / BCRC 13018 / CCUG 14551 / JCM 1027 / KCTC 2358 / NCIMB 9240 / NCTC 8049).